The sequence spans 224 residues: Putative homeobox protein R749 (224 aa).

Residues Lys-139–Gln-162 are disordered. Positions Gln-161–Leu-220 form a DNA-binding region, homeobox.

The protein resides in the host nucleus. The protein is Putative homeobox protein R749 of Acanthamoeba polyphaga mimivirus (APMV).